The following is a 784-amino-acid chain: Kinesin-like protein 6 (784 aa).

In terms of domain architecture, Kinesin motor spans Ser-6–Ile-389. Position 134–141 (Gly-134–Thr-141) interacts with ATP. 2 coiled-coil regions span residues Ser-405–Lys-440 and Arg-463–Ile-483. The tract at residues Ser-677–Leu-715 is disordered. Basic and acidic residues predominate over residues Ile-690–Asn-709.

The protein belongs to the TRAFAC class myosin-kinesin ATPase superfamily. Kinesin family. Kinesin II subfamily. Heterodimer with klp5.

It is found in the cytoplasm. It localises to the cytoskeleton. Its subcellular location is the chromosome. The protein localises to the centromere. The protein resides in the kinetochore. It is found in the spindle. Functionally, has a role in establishing metaphase during mitosis. Required for chromosome segregation where it generates tension during kinetochore capturing. The polypeptide is Kinesin-like protein 6 (klp6) (Schizosaccharomyces pombe (strain 972 / ATCC 24843) (Fission yeast)).